Consider the following 150-residue polypeptide: Large ribosomal subunit protein bL9 (150 aa).

The protein belongs to the bacterial ribosomal protein bL9 family.

Its function is as follows. Binds to the 23S rRNA. The sequence is that of Large ribosomal subunit protein bL9 from Polynucleobacter necessarius subsp. necessarius (strain STIR1).